The sequence spans 156 residues: Ribosomally synthesized cyclic peptide victorin precursosr vicA1 (156 aa).

A signal peptide spans 1-21 (MVRITALMSGSILLFALQALA). 7 propeptides span residues 22–36 (MPVE…AEKR), 43–55 (KRGE…EEKR), 62–74 (KRGE…EEKR), 81–93 (KRGE…EEKR), 100–112 (KRGE…EEKR), 119–131 (KRGE…EEKR), and 138–150 (KRGE…EEKR).

Post-translationally, vicA1 is processed by several endopeptidases including kexin proteases as well as the cluster-specific peptidases vicP1 and vicP2 to produce 7 identical copies of the hexapeptide Gly-Leu-Lys-Leu-Ala-Phe, that are further modified to yield victorins. After being excised from the precursor peptide, the core peptides are cyclized and modified post-translationally by enzymes encoded within the gene cluster. The ustYa family protein vicYb is required for the formation of the macrocycle in victorin and the copper amine oxidases (CAOs) vicK1 and vicK2 are responsible for converting victorin to the active form by oxidizing the N-terminal glycyl residue in the peptides to glyoxylate. Relaxed substrate specificity of enzymes in the victorin biosynthetic pathway results in a metabolic grid that produces a set of analogs including victorinines B, C, E or HV-toxin M.

The protein operates within mycotoxin biosynthesis. Functionally, ribosomally synthesized cyclic peptide victorin precursor, part of the gene cluster that mediates the biosynthesis of the secondary metabolite victorin, the molecular basis for Victoria blight of oats. The vicA1 translated product contains a 7-fold repeated peptide embedding the hexapeptide Gly-Leu-Lys-Leu-Ala-Phe, that is converted into the cyclic victorin. The polypeptide is Ribosomally synthesized cyclic peptide victorin precursosr vicA1 (Bipolaris victoriae (strain FI3) (Victoria blight of oats agent)).